A 362-amino-acid polypeptide reads, in one-letter code: Divinyl chlorophyll a/b light-harvesting protein PcbF (362 aa).

6 helical membrane-spanning segments follow: residues phenylalanine 27–leucine 47, isoleucine 89–leucine 109, phenylalanine 150–alanine 170, valine 211–alanine 231, alanine 251–cysteine 271, and leucine 316–isoleucine 336.

The protein belongs to the PsbB/PsbC family. IsiA/Pcb subfamily. The antenna complex consists of divinyl chlorophylls (a and b) and divinyl chlorophyll a/b binding proteins and binds more divinyl chlorophyll b than does the antenna complex from high-light-adapted Prochlorococcus. It depends on divinyl chlorophyll a as a cofactor. Divinyl chlorophyll b serves as cofactor.

It localises to the cellular thylakoid membrane. Its function is as follows. The antenna complex functions as a light receptor, it captures and delivers excitation energy to photosystems II and I. The Prochlorales pcb genes are not related to higher plant LHCs. The polypeptide is Divinyl chlorophyll a/b light-harvesting protein PcbF (pcbF) (Prochlorococcus marinus (strain NATL2A)).